Consider the following 389-residue polypeptide: MVAEHPTPPQPHQPPPMDSTAGSGIAAPAAAAVCDLRMEPKIPEPFVWPNGDARPASAAELDMPVVDVGVLRDGDAEGLRRAAAQVAAACATHGFFQVSEHGVDAALARAALDGASDFFRLPLAEKRRARRVPGTVSGYTSAHADRFASKLPWKETLSFGFHDRAAAPVVADYFSSTLGPDFAPMGRVYQKYCEEMKELSLTIMELLELSLGVERGYYREFFADSSSIMRCNYYPPCPEPERTLGTGPHCDPTALTILLQDDVGGLEVLVDGEWRPVSPVPGAMVINIGDTFMALSNGRYKSCLHRAVVNQRRERRSLAFFLCPREDRVVRPPPSAATPQHYPDFTWADLMRFTQRHYRADTRTLDAFTRWLAPPAADAAATAQVEAAS.

The segment covering 1–17 has biased composition (pro residues); sequence MVAEHPTPPQPHQPPPM. The interval 1–23 is disordered; the sequence is MVAEHPTPPQPHQPPPMDSTAGS. One can recognise a Fe2OG dioxygenase domain in the interval 224-324; sequence DSSSIMRCNY…RRSLAFFLCP (101 aa). Fe cation is bound by residues His249, Asp251, and His305. Residue Arg315 is part of the active site.

Belongs to the iron/ascorbate-dependent oxidoreductase family. GA20OX subfamily. Fe cation is required as a cofactor. The cofactor is L-ascorbate.

The enzyme catalyses gibberellin A12 + 2 2-oxoglutarate + 3 O2 + H(+) = gibberellin A9 + 2 succinate + 3 CO2 + 2 H2O. It carries out the reaction gibberellin A53 + 2 2-oxoglutarate + 3 O2 + H(+) = gibberellin A20 + 2 succinate + 3 CO2 + 2 H2O. Key oxidase enzyme in the biosynthesis of gibberellin that catalyzes the conversion of GA53 to GA20 via a three-step oxidation at C-20 of the GA skeleton. This is Gibberellin 20 oxidase 2 (20ox2) from Oryza sativa subsp. indica (Rice).